Consider the following 142-residue polypeptide: Large ribosomal subunit protein bL17 (142 aa).

Belongs to the bacterial ribosomal protein bL17 family. In terms of assembly, part of the 50S ribosomal subunit. Contacts protein L32.

The sequence is that of Large ribosomal subunit protein bL17 from Chlamydia caviae (strain ATCC VR-813 / DSM 19441 / 03DC25 / GPIC) (Chlamydophila caviae).